Reading from the N-terminus, the 101-residue chain is Urease subunit beta (101 aa).

This sequence belongs to the urease beta subunit family. Heterotrimer of UreA (gamma), UreB (beta) and UreC (alpha) subunits. Three heterotrimers associate to form the active enzyme.

It is found in the cytoplasm. It carries out the reaction urea + 2 H2O + H(+) = hydrogencarbonate + 2 NH4(+). It functions in the pathway nitrogen metabolism; urea degradation; CO(2) and NH(3) from urea (urease route): step 1/1. The chain is Urease subunit beta from Burkholderia mallei (strain NCTC 10247).